The primary structure comprises 185 residues: 16S rRNA aminocarboxypropyltransferase (185 aa).

S-adenosyl-L-methionine contacts are provided by threonine 19, isoleucine 69, leucine 93, tyrosine 108, and threonine 112.

It belongs to the TDD superfamily. TSR3 family.

Its subcellular location is the cytoplasm. It catalyses the reaction an N(1)-methylpseudouridine in rRNA + S-adenosyl-L-methionine = N(1)-methyl-N(3)-[(3S)-3-amino-3-carboxypropyl]pseudouridine in rRNA + S-methyl-5'-thioadenosine + H(+). Aminocarboxypropyltransferase that catalyzes the aminocarboxypropyl transfer on pseudouridine corresponding to position 914 in M.jannaschii 16S rRNA. It constitutes the last step in biosynthesis of the hypermodified N1-methyl-N3-(3-amino-3-carboxypropyl) pseudouridine (m1acp3-Psi). This is 16S rRNA aminocarboxypropyltransferase from Vulcanisaeta distributa (strain DSM 14429 / JCM 11212 / NBRC 100878 / IC-017).